The following is a 477-amino-acid chain: Cytoplasmic 60S subunit biogenesis factor ZNF622 (477 aa).

The residue at position 2 (A2) is an N-acetylalanine. 2 U1-type zinc fingers span residues 4–28 (YTCI…TDWH) and 67–91 (TYCT…SRRH). The segment at 135-212 (AIKAQPSMSP…EDLDGDDWED (78 aa)) is disordered. Residues 167–178 (GTHDRDPSEKPP) are compositionally biased toward basic and acidic residues. The segment covering 196–212 (EDSEEEEEDLDGDDWED) has biased composition (acidic residues). A Phosphoserine modification is found at S276.

Belongs to the REI1 family. Homo- and heterodimer. Associates with pre-60S ribosomal particles. Interacts with MELK and MYBL2. Interacts with DNAJC21. In terms of processing, phosphorylated by MELK. The phosphorylation may redirect the protein to the nucleus. Ubiquitinated by HECTD1, leading to its degradation. Expressed in lung, kidney, spleen, liver and brain with lowest expression in kidney.

The protein resides in the cytoplasm. Its subcellular location is the nucleus. Pre-60S-associated cytoplasmic factor involved in the cytoplasmic maturation of the 60S subunit. This chain is Cytoplasmic 60S subunit biogenesis factor ZNF622, found in Homo sapiens (Human).